The chain runs to 204 residues: ATP phosphoribosyltransferase (204 aa).

It belongs to the ATP phosphoribosyltransferase family. Short subfamily. In terms of assembly, heteromultimer composed of HisG and HisZ subunits.

The protein localises to the cytoplasm. It carries out the reaction 1-(5-phospho-beta-D-ribosyl)-ATP + diphosphate = 5-phospho-alpha-D-ribose 1-diphosphate + ATP. It participates in amino-acid biosynthesis; L-histidine biosynthesis; L-histidine from 5-phospho-alpha-D-ribose 1-diphosphate: step 1/9. Functionally, catalyzes the condensation of ATP and 5-phosphoribose 1-diphosphate to form N'-(5'-phosphoribosyl)-ATP (PR-ATP). Has a crucial role in the pathway because the rate of histidine biosynthesis seems to be controlled primarily by regulation of HisG enzymatic activity. The sequence is that of ATP phosphoribosyltransferase from Staphylococcus aureus (strain bovine RF122 / ET3-1).